We begin with the raw amino-acid sequence, 41 residues long: Large ribosomal subunit protein bL36 (41 aa).

This sequence belongs to the bacterial ribosomal protein bL36 family.

In Azorhizobium caulinodans (strain ATCC 43989 / DSM 5975 / JCM 20966 / LMG 6465 / NBRC 14845 / NCIMB 13405 / ORS 571), this protein is Large ribosomal subunit protein bL36.